Here is a 111-residue protein sequence, read N- to C-terminus: Translation initiation factor 1A (111 aa).

Residues 11–83 enclose the S1-like domain; it reads KKIRLPKEGE…ERADVTWRYT (73 aa).

It belongs to the eIF-1A family.

In terms of biological role, seems to be required for maximal rate of protein biosynthesis. Enhances ribosome dissociation into subunits and stabilizes the binding of the initiator Met-tRNA(I) to 40 S ribosomal subunits. This chain is Translation initiation factor 1A (eIF1A), found in Methanopyrus kandleri (strain AV19 / DSM 6324 / JCM 9639 / NBRC 100938).